A 275-amino-acid polypeptide reads, in one-letter code: Proteasome subunit beta (275 aa).

Residues 1 to 52 constitute a propeptide, removed in mature form; by autocatalysis; the sequence is MQDTTANQVAANATSSFTEHLQRNRPGLLPYNQPFPAALTGAGSQPLQVPHA. T53 acts as the Nucleophile in catalysis.

Belongs to the peptidase T1B family. In terms of assembly, the 20S proteasome core is composed of 14 alpha and 14 beta subunits that assemble into four stacked heptameric rings, resulting in a barrel-shaped structure. The two inner rings, each composed of seven catalytic beta subunits, are sandwiched by two outer rings, each composed of seven alpha subunits. The catalytic chamber with the active sites is on the inside of the barrel. Has a gated structure, the ends of the cylinder being occluded by the N-termini of the alpha-subunits. Is capped by the proteasome-associated ATPase, ARC.

Its subcellular location is the cytoplasm. It carries out the reaction Cleavage of peptide bonds with very broad specificity.. Its pathway is protein degradation; proteasomal Pup-dependent pathway. With respect to regulation, the formation of the proteasomal ATPase ARC-20S proteasome complex, likely via the docking of the C-termini of ARC into the intersubunit pockets in the alpha-rings, may trigger opening of the gate for substrate entry. Interconversion between the open-gate and close-gate conformations leads to a dynamic regulation of the 20S proteasome proteolysis activity. Component of the proteasome core, a large protease complex with broad specificity involved in protein degradation. The protein is Proteasome subunit beta of Arthrobacter sp. (strain FB24).